An 808-amino-acid chain; its full sequence is Protein NLP5 (808 aa).

Residues 56–68 (PTQDTSNSLSQMY) are compositionally biased toward polar residues. A disordered region spans residues 56 to 83 (PTQDTSNSLSQMYGQDCPERSSLEDQNQ). Residues 536–617 (NRVTEKKRTK…IDSVEGVSGH (82 aa)) enclose the RWP-RK domain. Positions 660–680 (SPGSSCSHSSSCSSETQVIKE) are disordered. The span at 663–673 (SSCSHSSSCSS) shows a compositional bias: low complexity. The PB1 domain occupies 710 to 793 (FLRVKVSYEE…QTIKLLLQLS (84 aa)).

It localises to the nucleus. Probable transcription factor. This chain is Protein NLP5 (NLP5), found in Arabidopsis thaliana (Mouse-ear cress).